The primary structure comprises 344 residues: F-box protein HRT3 (344 aa).

Residues 14-47 form a TPR repeat; the sequence is AIAIWEKGVLKEKDGSMSDAINFYRSALKIHDNV. The F-box domain maps to 98 to 148; the sequence is WILEILPDDILLRIIKKVILMSGESWVNLSMTCSTFSKLCFHDSVPFKTFA.

In terms of assembly, interacts with SKP1. Component of the probable SCF(HRT3) complex containing CDC53, SKP1, RBX1 and HRT3.

The protein operates within protein modification; protein ubiquitination. Functionally, substrate recognition component of a SCF (SKP1-CUL1-F-box protein) E3 ubiquitin-protein ligase complex which mediates the ubiquitination and subsequent proteasomal degradation of target proteins. Probably recognizes and binds to phosphorylated target proteins. The protein is F-box protein HRT3 (HRT3) of Saccharomyces cerevisiae (strain ATCC 204508 / S288c) (Baker's yeast).